Consider the following 585-residue polypeptide: Putative ABC transporter ATP-binding protein MG187 (585 aa).

The 461-residue stretch at 8-468 folds into the ABC transporter domain; sequence IELKNIVVDF…PANEFVARFL (461 aa). 40–47 is a binding site for ATP; that stretch reads GPSGCGKT.

This sequence belongs to the ABC transporter superfamily.

The chain is Putative ABC transporter ATP-binding protein MG187 from Mycoplasma genitalium (strain ATCC 33530 / DSM 19775 / NCTC 10195 / G37) (Mycoplasmoides genitalium).